Consider the following 98-residue polypeptide: Ferredoxin-like protein (98 aa).

To ferredoxins from P.putida and C.tartarivorum, ferredoxin I from A.vinelandii, ferredoxin II from D.desulfuricans.

Could be a 3Fe-4S cluster-containing protein. The protein is Ferredoxin-like protein (fixX) of Rhizobium leguminosarum bv. trifolii.